We begin with the raw amino-acid sequence, 343 residues long: Pentatricopeptide repeat-containing protein At1g06270 (343 aa).

PPR repeat units lie at residues 98–133, 134–169, 170–204, 205–240, 241–275, and 276–310; these read PKIV…GCLP, NPQT…GYSP, DTGT…GCIP, DVES…GISP, RKGM…DYPV, and EFES…GFIP.

Belongs to the PPR family. P subfamily.

This is Pentatricopeptide repeat-containing protein At1g06270 from Arabidopsis thaliana (Mouse-ear cress).